A 1004-amino-acid chain; its full sequence is Kinesin-like protein KIN-14R (1004 aa).

3 disordered regions span residues 1–21 (MEEE…RIGD), 61–90 (PYVD…MQHD), and 110–169 (ELFS…ATMG). The span at 63-75 (VDDDDDGNSEEEN) shows a compositional bias: acidic residues. A compositionally biased stretch (pro residues) spans 115–125 (PSPPQGPPSPS). 2 coiled-coil regions span residues 189–230 (CGQL…AQAS) and 266–338 (LNDL…LYNK). A Kinesin motor domain is found at 345–671 (NIRVFCRCRP…LNFASRVRGI (327 aa)). 428–435 (GQTGTGKT) is an ATP binding site. Positions 691–742 (MAGRAKQDSKNKDAQIKSMEETIQSLEAKNKAKDLLTMNLQEKIKELEAQLL) form a coiled coil. 2 disordered regions span residues 759 to 791 (DHLH…STAE) and 946 to 1004 (SGRR…RQLN). A compositionally biased stretch (low complexity) spans 948-958 (RRAGAGVAGTT). Residues 995 to 1004 (NNGTSLRQLN) show a composition bias toward polar residues.

It belongs to the TRAFAC class myosin-kinesin ATPase superfamily. Kinesin family. KIN-14 subfamily.

This is Kinesin-like protein KIN-14R from Oryza sativa subsp. japonica (Rice).